Consider the following 424-residue polypeptide: L-glutamine:2-deoxy-scyllo-inosose aminotransferase (424 aa).

At K202 the chain carries N6-(pyridoxal phosphate)lysine.

Belongs to the DegT/DnrJ/EryC1 family. L-glutamine:2-deoxy-scyllo-inosose/scyllo-inosose aminotransferase subfamily. The cofactor is pyridoxal 5'-phosphate.

It carries out the reaction 2-deoxy-L-scyllo-inosose + L-glutamine = 2-deoxy-scyllo-inosamine + 2-oxoglutaramate. The catalysed reaction is 3-amino-2,3-dideoxy-scyllo-inosose + L-glutamine = 2-deoxystreptamine + 2-oxoglutaramate. The protein operates within metabolic intermediate biosynthesis; 2-deoxystreptamine biosynthesis; 2-deoxystreptamine from D-glucose 6-phosphate: step 2/4. It functions in the pathway antibiotic biosynthesis; lividomycin biosynthesis. Functionally, catalyzes the PLP-dependent transamination of 2-deoxy-scyllo-inosose (2-DOI) to form 2-deoxy-scyllo-inosamine (2-DOIA) using L-glutamine as the amino donor. Also catalyzes the transamination of 3-amino-2,3-dideoxy-scyllo-inosose (keto-2-DOIA) into 2-deoxystreptamine (2-DOS). In Streptomyces lividus, this protein is L-glutamine:2-deoxy-scyllo-inosose aminotransferase (livS).